The following is a 364-amino-acid chain: Peptide chain release factor 1 (364 aa).

The residue at position 232 (glutamine 232) is an N5-methylglutamine.

It belongs to the prokaryotic/mitochondrial release factor family. Post-translationally, methylated by PrmC. Methylation increases the termination efficiency of RF1.

It localises to the cytoplasm. Functionally, peptide chain release factor 1 directs the termination of translation in response to the peptide chain termination codons UAG and UAA. The sequence is that of Peptide chain release factor 1 from Sorangium cellulosum (strain So ce56) (Polyangium cellulosum (strain So ce56)).